The primary structure comprises 1003 residues: Pumilio homolog 4 (1003 aa).

The disordered stretch occupies residues 38–65; it reads QHRNQQSFGRERERDIDVHRSGSAPPTV. A compositionally biased stretch (basic and acidic residues) spans 46-57; sequence GRERERDIDVHR. Position 225 is a phosphoserine (Ser225). Polar residues predominate over residues 285 to 300; the sequence is KNSPNTMLGSTMSSPV. Residues 285 to 328 are disordered; the sequence is KNSPNTMLGSTMSSPVPRNRTPDSHLVGRSTASGLPPIGTRVGP. Thr305 is subject to Phosphothreonine. Positions 644 to 984 constitute a PUM-HD domain; that stretch reads AEASLLEGFK…HIVARVEKLI (341 aa). 8 Pumilio repeats span residues 664 to 699, 700 to 735, 736 to 771, 772 to 807, 808 to 843, 845 to 880, 881 to 916, and 917 to 958; these read EIVGHVIEFSMDQYGSRFIQQKLETATDEEKNAIFP, EILPYGRTLMTDVFGNYVIQKFFEHGTTKQRKELAE, QVTGHVLALSLQMYGCRVIQKALEVVELEQQARMVK, ELDGSVMKCVHDQNGNHVIQKCIERLPQDWIQFIIS, SFYGKVLALSTHPYGCRVIQRVLEHIDDIETQRIIM, EIMDSVCTLAQDQYGNYVIQHIIQHGKPHERSEIIN, KLAGQIVKMSQQKFASNVVEKCLTFGGPEERQVLVN, and EMLG…LILS.

Its subcellular location is the cytoplasm. Sequence-specific RNA-binding protein that regulates translation and mRNA stability by binding the 3'-UTR of target mRNAs. Binds the APUM-binding elements (APBEs) in the 3'-UTR mRNA sequence of CLV1, PNH, WUS and FAS2. The polypeptide is Pumilio homolog 4 (APUM4) (Arabidopsis thaliana (Mouse-ear cress)).